The sequence spans 498 residues: Signal recognition particle receptor FtsY (498 aa).

Disordered stretches follow at residues 1–130 and 147–200; these read MGLF…PNQS and KVES…YNRS. A compositionally biased stretch (low complexity) spans 36-46; that stretch reads ALLAETAETAE. Polar residues predominate over residues 103–120; the sequence is SENSVAAVQNNTETMPSQ. GTP-binding positions include 301 to 308, 383 to 387, and 447 to 450; these read GVNGVGKT, DTAGR, and TKID.

This sequence belongs to the GTP-binding SRP family. FtsY subfamily. In terms of assembly, part of the signal recognition particle protein translocation system, which is composed of SRP and FtsY.

The protein localises to the cell membrane. It is found in the cytoplasm. The enzyme catalyses GTP + H2O = GDP + phosphate + H(+). In terms of biological role, involved in targeting and insertion of nascent membrane proteins into the cytoplasmic membrane. Acts as a receptor for the complex formed by the signal recognition particle (SRP) and the ribosome-nascent chain (RNC). This is Signal recognition particle receptor FtsY from Streptococcus mutans serotype c (strain ATCC 700610 / UA159).